Consider the following 209-residue polypeptide: Uracil phosphoribosyltransferase (209 aa).

Residues arginine 79, arginine 104, and 131-139 contribute to the 5-phospho-alpha-D-ribose 1-diphosphate site; that span reads DPMLATGGS. Uracil-binding positions include isoleucine 194 and 199–201; that span reads GDA. Aspartate 200 contributes to the 5-phospho-alpha-D-ribose 1-diphosphate binding site.

This sequence belongs to the UPRTase family. Requires Mg(2+) as cofactor.

It carries out the reaction UMP + diphosphate = 5-phospho-alpha-D-ribose 1-diphosphate + uracil. It participates in pyrimidine metabolism; UMP biosynthesis via salvage pathway; UMP from uracil: step 1/1. Allosterically activated by GTP. In terms of biological role, catalyzes the conversion of uracil and 5-phospho-alpha-D-ribose 1-diphosphate (PRPP) to UMP and diphosphate. In Clostridium novyi (strain NT), this protein is Uracil phosphoribosyltransferase.